The primary structure comprises 121 residues: Large ribosomal subunit protein uL18 (121 aa).

It belongs to the universal ribosomal protein uL18 family. As to quaternary structure, part of the 50S ribosomal subunit; part of the 5S rRNA/L5/L18/L25 subcomplex. Contacts the 5S and 23S rRNAs.

Its function is as follows. This is one of the proteins that bind and probably mediate the attachment of the 5S RNA into the large ribosomal subunit, where it forms part of the central protuberance. The chain is Large ribosomal subunit protein uL18 from Roseiflexus castenholzii (strain DSM 13941 / HLO8).